The following is a 378-amino-acid chain: Cytochrome P450 monooxygenase pytD (378 aa).

Cys-321 provides a ligand contact to heme.

The protein belongs to the cytochrome P450 family. Heme is required as a cofactor.

The protein operates within secondary metabolite biosynthesis. Cytochrome P450 monooxygenase pytD; part of the gene cluster that mediates the biosynthesis of pyranterreones, a family of antioxidative compounds. The first step of pyranonigrins biosynthesis is performed by the hybrid PKS-NRPS synthetase pytA that condenses 4 malonyl-CoA units ato the acetyl starter unit by the modular PKS of pytA. The acyl chain is then connected to an L-serine through the amide bond by the modular NRPS of pytA. A tetramic acid is formed and released from the PKS-NRPS pytA to give pyranterreone 5 with the help of the thioesterase pytI. Pyranterreone 5 could be methylated by pytC to afford pyranterreone 6. Both pyranterreones 5 and 6 are subsequently oxidized by the FAD-linked oxidoreductase pytB and the cytochrome P450 monooxygenase pytD to form the fused gamma-pyrone core, resulting in pyranterreones 7 and 11, respectively. The hydroxy group at C-8 of pyranterreones 7 and 11 are dehydrated by the aspartyl protease pytH to form a delta-7 double bond to give pyranterreones 3 and 1, 2 accordingly. The exo-methylene of pyranterreone 3 could be reduced into a pendant methyl by reductase pytE to provide pyranterreone 4, also known as cordylactam. Pyranterreone 4 can be reconverted to pyranterreone 3 through pytB-catalyzed dehydrogenation or further oxidized to pyranterreones 9 and 10. In Aspergillus terreus (strain NIH 2624 / FGSC A1156), this protein is Cytochrome P450 monooxygenase pytD.